A 561-amino-acid chain; its full sequence is MKLFITITPNLEKLLHNEIKDILRTNKLTLPKFQVFEGGIEIDLTKDPNISEQEKEYYLWSISNCSRLAESIRIRVGLSFPCKNFSQFNINLEKLDYKTYFPTSSIEPQVAVSCNASTLYHTNAIKERFIKHFNNSIKDKISIDINYSKFKPIKKLLKNLRYKLRKIQNPNDDEIIGGGDDHEIIGDDEELSEEEILNRIDKLQIELEQVIGKQKNIPQSKVFIRIDQNVGQLSVDACTSGEGQLLHKRTLNKHISDAPIRETLASAIIMAIISSTRRVGSGTTEGSYLDLNKTNIWDPFVGSGTLIQEAISMLLKAKPSSCTNYKRSFQFERFKNHSTERYLKYLESINKPISPLIKNTILIGSDIDQKAIDSSIFNLSKQGYQHENIKFFKGDFKSIYLDQINIDNSLDDDGDNNNNKPFTIITNLPYGTRVLNRNQPQQQQNQPIQPKATKIKEGENYYEDDDDDDFFSIRSPKKDNVNIYLNNSISKDLRDLFKRFGDMIHESNESVLRDVFVLNGNSHFQSISTNNGKNNFEWERILNFRNGGLTVELLKMVKKPN.

A coiled-coil region spans residues 187 to 217 (DDEELSEEEILNRIDKLQIELEQVIGKQKNI).

This is an uncharacterized protein from Dictyostelium discoideum (Social amoeba).